The chain runs to 453 residues: uncharacterized protein (453 aa).

This is an uncharacterized protein from Magallana gigas (Pacific oyster).